The primary structure comprises 103 residues: Large ribosomal subunit protein uL24 (103 aa).

The protein belongs to the universal ribosomal protein uL24 family. In terms of assembly, part of the 50S ribosomal subunit.

One of two assembly initiator proteins, it binds directly to the 5'-end of the 23S rRNA, where it nucleates assembly of the 50S subunit. Its function is as follows. One of the proteins that surrounds the polypeptide exit tunnel on the outside of the subunit. The protein is Large ribosomal subunit protein uL24 of Haemophilus influenzae (strain ATCC 51907 / DSM 11121 / KW20 / Rd).